Here is a 358-residue protein sequence, read N- to C-terminus: Bis(monoacylglycero)phosphate synthase CLN5 (358 aa).

Topologically, residues 1–23 (MAQEVDTAQGAEMRRGAGAARGR) are cytoplasmic. The chain crosses the membrane as a helical; Signal-anchor for type II membrane protein span at residues 24-40 (ASWCWALALLWLAVVPG). At 41–358 (WSRVSGIPSR…PIRNKTLSGL (318 aa)) the chain is on the lumenal side. 2 cysteine pairs are disulfide-bonded: Cys-70–Cys-159 and Cys-77–Cys-165. His-117 (proton acceptor) is an active-site residue. 4 N-linked (GlcNAc...) asparagine glycosylation sites follow: Asn-130, Asn-143, Asn-178, and Asn-203. Cys-231 (nucleophile; Acyl-thioester intermediate) is an active-site residue. Residues Asn-255, Asn-271, and Asn-281 are each glycosylated (N-linked (GlcNAc...) asparagine). The segment at 304 to 343 (FLLSLLQIFDAVIVHKQFYLFYNFEYWFLPMKFPFIKITY) is membrane-anchoring. A glycan (N-linked (GlcNAc...) asparagine) is linked at Asn-352.

This sequence belongs to the CLN5 family. As to quaternary structure, multimer. Interacts with SORT1, RAB5A and RAB7A. Interacts with PPT1, TPP1, CLN3, CLN6, CLN8, ATP5F1A and ATP5F1B. In terms of processing, N-glycosylated with both high mannose and complex type sugars. Glycosylation is important for proper folding and trafficking to the lysosomes. Post-translationally, the type II membrane signal anchor is proteolytically cleaved to produce a mature form that is transported to the lysosomes (Bis(monoacylglycero)phosphate synthase CLN5, secreted form). Can undergo proteolytic cleavage at the C-terminus, probably by a cysteine protease and may involve the removal of approximately 10-15 residues from the C-terminal end. Ubiquitous.

It is found in the lysosome. The protein resides in the membrane. The enzyme catalyses S-hexadecanoyl-L-cysteinyl-[protein] + H2O = L-cysteinyl-[protein] + hexadecanoate + H(+). It catalyses the reaction 2 1-acyl-sn-glycero-3-phospho-(1'-sn-glycerol) = 1-acyl-sn-glycero-3-phospho-(3'-acyl-sn-1'-glycerol) + sn-glycero-3-phospho-(1'-sn-glycerol). It carries out the reaction 2 1-(9Z-octadecenoyl)-sn-glycero-3-phospho-(1'-sn-glycerol) = 1-(9Z-octadecenoyl)-sn-glycero-3-phospho-(3'-(9Z-octadecenoyl)-1'-sn-glycerol) + sn-glycero-3-phospho-(1'-sn-glycerol). The catalysed reaction is 2 1-octadecanoyl-sn-glycero-3-phospho-(1'-sn-glycerol) = 1-octadecanoyl-sn-glycero-3-phospho-(3'-octadecanoyl-1'-sn-glycerol) + sn-glycero-3-phospho-(1'-sn-glycerol). The enzyme catalyses 2 1-hexadecanoyl-sn-glycero-3-phospho-(1'-sn-glycerol) = 1-hexadecanoyl-sn-glycero-3-phospho-(3'-hexadecanoyl-1'-sn-glycerol) + sn-glycero-3-phospho-(1'-sn-glycerol). It catalyses the reaction 2 1-tetradecanoyl-sn-glycero-3-phospho-(1'-sn-glycerol) = 1-tetradecanoyl-sn-glycero-3-phospho-(3'-tetradecanoyl-1'-sn-glycerol) + sn-glycero-3-phospho-(1'-sn-glycerol). Anionic phospholipids activate bis(monoacylglycero)phosphate (BMP) synthase activity. Amiodarone, a cationic amphiphilic drug inhibits BMP synthase activity towards liposomal lysophosphatidylglycerol. Palmostatin B inhibits palmitoyl protein thioesterase activity. Its function is as follows. Catalyzes the synthesis of bis(monoacylglycero)phosphate (BMP) via transacylation of 2 molecules of lysophosphatidylglycerol (LPG). BMP also known as lysobisphosphatidic acid plays a key role in the formation of intraluminal vesicles and in maintaining intracellular cholesterol homeostasis. Can use only LPG as the exclusive lysophospholipid acyl donor for base exchange and displays BMP synthase activity towards various LPGs (LPG 14:0, LPG 16:0, LPG 18:0, LPG 18:1) with a higher preference for longer chain lengths. Plays a role in influencing the retrograde trafficking of lysosomal sorting receptors SORT1 and IGF2R from the endosomes to the trans-Golgi network by controlling the recruitment of retromer complex to the endosomal membrane. Regulates the localization and activation of RAB7A which is required to recruit the retromer complex to the endosomal membrane. Exhibits palmitoyl protein thioesterase (S-depalmitoylation) activity in vitro and most likely plays a role in protein S-depalmitoylation. This Homo sapiens (Human) protein is Bis(monoacylglycero)phosphate synthase CLN5 (CLN5).